We begin with the raw amino-acid sequence, 1172 residues long: Lysylphosphatidylglycerol biosynthesis bifunctional protein LysX (1172 aa).

A disordered region spans residues 1 to 34; that stretch reads MGLHLTVPGLRRDGRGVQSNSHDTSSKTTADISR. The segment at 1 to 663 is phosphatidylglycerol lysyltransferase; the sequence is MGLHLTVPGL…LLHHDGSAPD (663 aa). Residues 17–31 show a composition bias toward polar residues; it reads VQSNSHDTSSKTTAD. 7 consecutive transmembrane segments (helical) span residues 80 to 100, 122 to 142, 146 to 166, 177 to 197, 214 to 234, 272 to 292, and 612 to 632; these read VPAA…LASV, FPDT…ALTA, IAWL…AAEI, FGEN…VLGY, AVWL…VELF, AIFG…LFLS, and VIPR…LPFS. The lysine--tRNA ligase stretch occupies residues 664–1172; that stretch reads VSGLRQVGLT…TLPFPLAKPH (509 aa). The OB DNA-binding region spans 726 to 804; it reads VSVSGRIMRI…SLIVSGWRLI (79 aa). Residues Asp1084 and Glu1091 each coordinate Mg(2+).

It in the N-terminal section; belongs to the LPG synthetase family. This sequence in the C-terminal section; belongs to the class-II aminoacyl-tRNA synthetase family. The cofactor is Mg(2+).

The protein localises to the cell membrane. It catalyses the reaction tRNA(Lys) + L-lysine + ATP = L-lysyl-tRNA(Lys) + AMP + diphosphate. The enzyme catalyses L-lysyl-tRNA(Lys) + a 1,2-diacyl-sn-glycero-3-phospho-(1'-sn-glycerol) = a 1,2-diacyl-sn-glycero-3-phospho-1'-(3'-O-L-lysyl)-sn-glycerol + tRNA(Lys). Catalyzes the production of L-lysyl-tRNA(Lys)transfer and the transfer of a lysyl group from L-lysyl-tRNA(Lys) to membrane-bound phosphatidylglycerol (PG), which produces lysylphosphatidylglycerol (LPG), one of the components of the bacterial membrane with a positive net charge. LPG synthesis contributes to the resistance to cationic antimicrobial peptides (CAMPs) and likely protects M.tuberculosis against the CAMPs produced by competiting microorganisms (bacteriocins). In fact, the modification of anionic phosphatidylglycerol with positively charged L-lysine results in repulsion of the peptides. This Mycobacterium bovis (strain BCG / Pasteur 1173P2) protein is Lysylphosphatidylglycerol biosynthesis bifunctional protein LysX (lysX).